We begin with the raw amino-acid sequence, 134 residues long: Cytochrome b (134 aa).

3 helical membrane passes run 33 to 53, 77 to 98, and 113 to 133; these read FGSL…FLAM, WILR…FLHV, and WNIG…GYVL. Residues histidine 83 and histidine 97 each contribute to the heme b site.

It belongs to the cytochrome b family. In terms of assembly, the cytochrome bc1 complex contains 11 subunits: 3 respiratory subunits (MT-CYB, CYC1 and UQCRFS1), 2 core proteins (UQCRC1 and UQCRC2) and 6 low-molecular weight proteins (UQCRH/QCR6, UQCRB/QCR7, UQCRQ/QCR8, UQCR10/QCR9, UQCR11/QCR10 and a cleavage product of UQCRFS1). This cytochrome bc1 complex then forms a dimer. Requires heme b as cofactor.

Its subcellular location is the mitochondrion inner membrane. In terms of biological role, component of the ubiquinol-cytochrome c reductase complex (complex III or cytochrome b-c1 complex) that is part of the mitochondrial respiratory chain. The b-c1 complex mediates electron transfer from ubiquinol to cytochrome c. Contributes to the generation of a proton gradient across the mitochondrial membrane that is then used for ATP synthesis. This Rhinolophus hipposideros (Lesser horseshoe bat) protein is Cytochrome b (MT-CYB).